The following is a 360-amino-acid chain: Phospho-N-acetylmuramoyl-pentapeptide-transferase (360 aa).

The next 10 helical transmembrane spans lie at 26–46, 70–90, 97–117, 134–154, 168–188, 199–219, 236–256, 263–283, 288–308, and 338–358; these read AILG…AMIR, GTPT…TLLW, FVWV…IDDY, FFWQ…TAQA, VAIQ…VGAS, GLAI…AYLS, VGDL…FLWF, VFMG…LAVV, IVLV…IMQV, and VIVR…ATLK.

It belongs to the glycosyltransferase 4 family. MraY subfamily. Mg(2+) is required as a cofactor.

The protein localises to the cell inner membrane. It catalyses the reaction UDP-N-acetyl-alpha-D-muramoyl-L-alanyl-gamma-D-glutamyl-meso-2,6-diaminopimeloyl-D-alanyl-D-alanine + di-trans,octa-cis-undecaprenyl phosphate = di-trans,octa-cis-undecaprenyl diphospho-N-acetyl-alpha-D-muramoyl-L-alanyl-D-glutamyl-meso-2,6-diaminopimeloyl-D-alanyl-D-alanine + UMP. The protein operates within cell wall biogenesis; peptidoglycan biosynthesis. Its function is as follows. Catalyzes the initial step of the lipid cycle reactions in the biosynthesis of the cell wall peptidoglycan: transfers peptidoglycan precursor phospho-MurNAc-pentapeptide from UDP-MurNAc-pentapeptide onto the lipid carrier undecaprenyl phosphate, yielding undecaprenyl-pyrophosphoryl-MurNAc-pentapeptide, known as lipid I. In Thioalkalivibrio sulfidiphilus (strain HL-EbGR7), this protein is Phospho-N-acetylmuramoyl-pentapeptide-transferase.